Here is a 475-residue protein sequence, read N- to C-terminus: tRNA modification GTPase MnmE (475 aa).

3 residues coordinate (6S)-5-formyl-5,6,7,8-tetrahydrofolate: Arg24, Glu81, and Lys124. The TrmE-type G domain occupies 220–397 (GLSVVLAGQP…LRKELLRLVG (178 aa)). Residue Asn230 coordinates K(+). GTP-binding positions include 230 to 235 (NVGKSS), 249 to 255 (TPIAGTT), 274 to 277 (DTAG), and 378 to 380 (SAR). Ser234 contributes to the Mg(2+) binding site. The K(+) site is built by Thr249, Ile251, and Thr254. Mg(2+) is bound at residue Thr255. A (6S)-5-formyl-5,6,7,8-tetrahydrofolate-binding site is contributed by Lys475.

The protein belongs to the TRAFAC class TrmE-Era-EngA-EngB-Septin-like GTPase superfamily. TrmE GTPase family. As to quaternary structure, homodimer. Heterotetramer of two MnmE and two MnmG subunits. K(+) serves as cofactor.

It is found in the cytoplasm. In terms of biological role, exhibits a very high intrinsic GTPase hydrolysis rate. Involved in the addition of a carboxymethylaminomethyl (cmnm) group at the wobble position (U34) of certain tRNAs, forming tRNA-cmnm(5)s(2)U34. The chain is tRNA modification GTPase MnmE from Cupriavidus pinatubonensis (strain JMP 134 / LMG 1197) (Cupriavidus necator (strain JMP 134)).